The sequence spans 144 residues: Large ribosomal subunit protein uL15 (144 aa).

Residues 1–51 (MRLNTIKPGAGSKSAGKRVGRGIGSGLGKTCGRGHKGQKSRAGGFHKVGFE) form a disordered region. A compositionally biased stretch (gly residues) spans 21–31 (RGIGSGLGKTC).

This sequence belongs to the universal ribosomal protein uL15 family. Part of the 50S ribosomal subunit.

In terms of biological role, binds to the 23S rRNA. The polypeptide is Large ribosomal subunit protein uL15 (Azoarcus sp. (strain BH72)).